A 914-amino-acid polypeptide reads, in one-letter code: MRQKFRFAAYVLAGFGLIFLALTIAGARLYTDWLWFQSVNYQRVFATIIISDLGLRLAVGLTFFVLLFLNLMLTRRPLLKVSQNSAIIREKDVLTIQSSPLSQLITPKLLLLAFIALSALMAFLFNFTVAGDWITFQKFLHPTSFGIKDPVFNLDIGFYVFKLPFYIFIYKVINWVILVSAFWVLAAYFVVYFIQGNPGAIFRNISARYHFSFLAAIFFGLKAAGYQLEQYSLLFSHHGAVWGPGYTATHATLLAYKVLTYIALLCALAILINLFLRRFKLVIYSIGVLLIASVLLGGIYPAAVQKFMVTPNEIAMERPYLERNINFTRLAYNLDEIEKRYFPAGRVLTAEDIRANQDTISNIRLWDWEPLQQTYGQLQEMRLYYEFKDIDVDRYIVNGRYRQVMVAARELNQEHLPAQAKTWVNQRLKFTHGYGIAMSPVNELTGEGLPAFFLKDIPPTGPTDLQVTRPEIYYGEASDQYVIVNTRSQEFDYPKGEENVFSTYEGDGGVRVANFLRRLMFAFSLGDYKLLLSSEVDNNSRVLYYRNIRQRVPKIAPFLQYDNDPYIILSEGKLYWMWDAYTTTDKFPYSEPYNKNDNYIRNAVKVVVDAYTGKVDFYISDSSDPLVLTYSKIFPGMFKPLDSMPEDLRRHIRYPVDLFKTQAKMYAVYHMEDPQVFYNKEDKWNLPTEIYASEEKPMEPYYTVIKLPGENKPEYVLILPFTPQNKKNMIAWLAARSDGENYGKLISYSFPKQELVYGPMQVEARINQDTTISQQLTLWDQGGSRVIRGNLFAVPIKDALLYVEPLYLQAEQSRMPELRRVIVAHGEKVVMEPTLDKALEKIFGEGATVQKSVQQPVDVTQPQPEKSIAELANTANQIYDEAMKKIKAGDWAGYGEDLSRLKQVLAELAERAGK.

7 consecutive transmembrane segments (helical) span residues 7–27 (FAAY…IAGA), 48–68 (IIIS…VLLF), 109–129 (LLLL…NFTV), 173–193 (INWV…VVYF), 209–229 (YHFS…YQLE), 252–272 (TLLA…AILI), and 281–301 (LVIY…GIYP).

It belongs to the UPF0182 family.

It is found in the cell membrane. This Pelotomaculum thermopropionicum (strain DSM 13744 / JCM 10971 / SI) protein is UPF0182 protein PTH_1387.